We begin with the raw amino-acid sequence, 414 residues long: Isocitrate dehydrogenase [NADP] cytoplasmic (414 aa).

At Ser-2 the chain carries N-acetylserine. Tyr-42 carries the post-translational modification Phosphotyrosine. 75–77 (TIT) contributes to the NADP(+) binding site. Thr-77 lines the substrate pocket. The residue at position 81 (Lys-81) is an N6-acetyllysine. Residue Arg-82 coordinates NADP(+). Substrate is bound by residues 94–100 (SPNGTIR) and Arg-109. An N6-succinyllysine modification is found at Lys-126. Substrate is bound by residues Arg-132 and Lys-212. 2 positions are modified to N6-acetyllysine: Lys-224 and Lys-233. Asp-252 is a binding site for Mn(2+). Lys-260 contributes to the NADP(+) binding site. Positions 275 and 279 each coordinate Mn(2+). Residue 310–315 (GTVTRH) participates in NADP(+) binding. An N6-acetyllysine modification is found at Lys-321. Asn-328 is an NADP(+) binding site. At Ser-389 the chain carries Phosphoserine. Lys-400 is subject to N6-succinyllysine.

It belongs to the isocitrate and isopropylmalate dehydrogenases family. In terms of assembly, homodimer. Mg(2+) is required as a cofactor. It depends on Mn(2+) as a cofactor. Post-translationally, acetylation at Lys-374 dramatically reduces catalytic activity.

Its subcellular location is the cytoplasm. It is found in the cytosol. It carries out the reaction D-threo-isocitrate + NADP(+) = 2-oxoglutarate + CO2 + NADPH. Functionally, catalyzes the NADP(+)-dependent oxidative decarboxylation of isocitrate (D-threo-isocitrate) to 2-ketoglutarate (2-oxoglutarate), which is required by other enzymes such as the phytanoyl-CoA dioxygenase. Plays a critical role in the generation of NADPH, an important cofactor in many biosynthesis pathways. May act as a corneal epithelial crystallin and may be involved in maintaining corneal epithelial transparency. In Ovis aries (Sheep), this protein is Isocitrate dehydrogenase [NADP] cytoplasmic (IDH1).